The primary structure comprises 393 residues: Xylose transport system permease protein XylH (393 aa).

Topologically, residues 1-24 (MSKSNPSEVKLAVPTSGGFSGLKS) are periplasmic. Residues 25–45 (LNLQVFVMIAAIIAIMLFFTW) form a helical membrane-spanning segment. Over 46 to 64 (TTDGAYLSARNVSNLLRQT) the chain is Cytoplasmic. A helical transmembrane segment spans residues 65-85 (AITGILAVGMVFVIISAEIDL). At 86–102 (SVGSMMGLLGGVAAICD) the chain is on the periplasmic side. A helical transmembrane segment spans residues 103-123 (VWLGWPLPLTIIVTLVLGLLL). Over 124–135 (GAWNGWWVAYRK) the chain is Cytoplasmic. A helical transmembrane segment spans residues 136–156 (VPSFIVTLAGMLAFRGILIGI). Residues 157–175 (TNGTTVSPTSAAMSQIGQS) are Periplasmic-facing. A helical membrane pass occupies residues 176 to 196 (YLPASTGFIIGALGLMAFVGW). Over 197 to 214 (QWRGRMRRQALGLQSPAS) the chain is Cytoplasmic. A helical transmembrane segment spans residues 215 to 235 (TAVVGRQALTAIIVLGAIWLL). The Periplasmic segment spans residues 236-239 (NDYR). Residues 240 to 260 (GVPTPVLLLTLLLLGGMFMAT) traverse the membrane as a helical segment. The Cytoplasmic portion of the chain corresponds to 261–287 (RTAFGRRIYAIGGNLEAARLSGINVER). The chain crosses the membrane as a helical span at residues 288 to 308 (TKLAVFAINGLMVAIAGLILS). Topologically, residues 309–312 (SRLG) are periplasmic. The chain crosses the membrane as a helical span at residues 313 to 333 (AGSPSAGNIAELDAIAACVIG). Over 334–336 (GTS) the chain is Cytoplasmic. The helical transmembrane segment at 337-357 (LAGGVGSVAGAVMGAFIMASL) threads the bilayer. Residues 358-365 (DNGMSMMD) are Periplasmic-facing. The chain crosses the membrane as a helical span at residues 366-386 (VPTFWQYIVKGAILLLAVWMD). Residues 387–393 (SATKRRS) lie on the Cytoplasmic side of the membrane.

The protein belongs to the binding-protein-dependent transport system permease family. AraH/RbsC subfamily.

The protein resides in the cell inner membrane. Functionally, part of the binding-protein-dependent transport system for D-xylose. Probably responsible for the translocation of the substrate across the membrane. This Escherichia coli O6:H1 (strain CFT073 / ATCC 700928 / UPEC) protein is Xylose transport system permease protein XylH (xylH).